Here is a 568-residue protein sequence, read N- to C-terminus: Nitrite reductase (568 aa).

An N-terminal signal peptide occupies residues 1-25 (MPFGKPLVGTLLASLTLLGLATAHA). Residues 26–54 (KDDMKAAEQYQGAASAVDPAHVVRTNGAP) are N-terminal tail. One can recognise a Cytochrome c domain in the interval 55–140 (DMSESEFNEA…AKYIQHTPPQ (86 aa)). Residues Cys-72, Cys-75, His-76, Arg-96, Thr-109, and Met-113 each coordinate heme c. Residues 141 to 568 (PPEWGMPEMR…NVYNTQHDVY (428 aa)) are D1-heme domain. Residues His-207, Arg-250, Ser-251, Tyr-270, Arg-397, and Gln-508 each coordinate heme d1.

In terms of assembly, homodimer. It depends on heme c as a cofactor. Heme serves as cofactor.

The protein resides in the periplasm. The enzyme catalyses nitric oxide + Fe(III)-[cytochrome c] + H2O = Fe(II)-[cytochrome c] + nitrite + 2 H(+). The catalysed reaction is A + NH4(+) + H2O = hydroxylamine + AH2 + H(+). In Pseudomonas aeruginosa (strain ATCC 15692 / DSM 22644 / CIP 104116 / JCM 14847 / LMG 12228 / 1C / PRS 101 / PAO1), this protein is Nitrite reductase (nirS).